Here is a 143-residue protein sequence, read N- to C-terminus: Large ribosomal subunit protein uL11 (143 aa).

The protein belongs to the universal ribosomal protein uL11 family. In terms of assembly, part of the ribosomal stalk of the 50S ribosomal subunit. Interacts with L10 and the large rRNA to form the base of the stalk. L10 forms an elongated spine to which L12 dimers bind in a sequential fashion forming a multimeric L10(L12)X complex. In terms of processing, one or more lysine residues are methylated.

In terms of biological role, forms part of the ribosomal stalk which helps the ribosome interact with GTP-bound translation factors. The chain is Large ribosomal subunit protein uL11 from Pseudomonas paraeruginosa (strain DSM 24068 / PA7) (Pseudomonas aeruginosa (strain PA7)).